A 388-amino-acid chain; its full sequence is Arginine biosynthesis bifunctional protein ArgJ (388 aa).

T150, K172, T183, E263, N383, and T388 together coordinate substrate. The active-site Nucleophile is the T183.

The protein belongs to the ArgJ family. Heterotetramer of two alpha and two beta chains.

The protein localises to the cytoplasm. The enzyme catalyses N(2)-acetyl-L-ornithine + L-glutamate = N-acetyl-L-glutamate + L-ornithine. It carries out the reaction L-glutamate + acetyl-CoA = N-acetyl-L-glutamate + CoA + H(+). It participates in amino-acid biosynthesis; L-arginine biosynthesis; L-ornithine and N-acetyl-L-glutamate from L-glutamate and N(2)-acetyl-L-ornithine (cyclic): step 1/1. Its pathway is amino-acid biosynthesis; L-arginine biosynthesis; N(2)-acetyl-L-ornithine from L-glutamate: step 1/4. In terms of biological role, catalyzes two activities which are involved in the cyclic version of arginine biosynthesis: the synthesis of N-acetylglutamate from glutamate and acetyl-CoA as the acetyl donor, and of ornithine by transacetylation between N(2)-acetylornithine and glutamate. This chain is Arginine biosynthesis bifunctional protein ArgJ, found in Corynebacterium efficiens (strain DSM 44549 / YS-314 / AJ 12310 / JCM 11189 / NBRC 100395).